A 129-amino-acid polypeptide reads, in one-letter code: Phosphoribosyl-AMP cyclohydrolase (129 aa).

D78 provides a ligand contact to Mg(2+). C79 is a Zn(2+) binding site. D80 and D82 together coordinate Mg(2+). 2 residues coordinate Zn(2+): C96 and C103.

It belongs to the PRA-CH family. In terms of assembly, homodimer. Requires Mg(2+) as cofactor. It depends on Zn(2+) as a cofactor.

It is found in the cytoplasm. It carries out the reaction 1-(5-phospho-beta-D-ribosyl)-5'-AMP + H2O = 1-(5-phospho-beta-D-ribosyl)-5-[(5-phospho-beta-D-ribosylamino)methylideneamino]imidazole-4-carboxamide. Its pathway is amino-acid biosynthesis; L-histidine biosynthesis; L-histidine from 5-phospho-alpha-D-ribose 1-diphosphate: step 3/9. Functionally, catalyzes the hydrolysis of the adenine ring of phosphoribosyl-AMP. This chain is Phosphoribosyl-AMP cyclohydrolase, found in Nitrosomonas eutropha (strain DSM 101675 / C91 / Nm57).